The primary structure comprises 49 residues: Large ribosomal subunit protein bL33 (49 aa).

It belongs to the bacterial ribosomal protein bL33 family.

This chain is Large ribosomal subunit protein bL33, found in Clostridium acetobutylicum (strain ATCC 824 / DSM 792 / JCM 1419 / IAM 19013 / LMG 5710 / NBRC 13948 / NRRL B-527 / VKM B-1787 / 2291 / W).